Here is a 262-residue protein sequence, read N- to C-terminus: Flap endonuclease Xni (262 aa).

Residue aspartate 105 participates in Mg(2+) binding. One can recognise a 5'-3' exonuclease domain in the interval 164 to 251; that stretch reads SQFLDLMALA…NINLKDFRAN (88 aa). 5 residues coordinate K(+): leucine 172, alanine 173, proline 181, isoleucine 183, and isoleucine 186. Positions 185 to 190 are interaction with DNA; the sequence is GIGPKS.

The protein belongs to the Xni family. Requires Mg(2+) as cofactor. It depends on K(+) as a cofactor.

Its function is as follows. Has flap endonuclease activity. During DNA replication, flap endonucleases cleave the 5'-overhanging flap structure that is generated by displacement synthesis when DNA polymerase encounters the 5'-end of a downstream Okazaki fragment. This chain is Flap endonuclease Xni, found in Shewanella putrefaciens (strain CN-32 / ATCC BAA-453).